The primary structure comprises 168 residues: uncharacterized protein (168 aa).

Disordered regions lie at residues 37-74, 81-100, and 117-168; these read GGSK…SQFT, QYNY…PNYY, and MQPF…EETN. 2 stretches are compositionally biased toward polar residues: residues 52 to 74 and 82 to 95; these read HSGQ…SQFT and YNYN…TRSV. The span at 120 to 129 shows a compositional bias: low complexity; that stretch reads FNNQSFNNQS. The span at 130-158 shows a compositional bias: polar residues; that stretch reads RTHQSKTYQHNQQKRSFNGPRNNGPQNNV.

This is an uncharacterized protein from Acanthamoeba polyphaga (Amoeba).